The sequence spans 888 residues: Leucine--tRNA ligase (888 aa).

Positions 42–52 (PYPSGKLHMGH) match the 'HIGH' region motif. A 'KMSKS' region motif is present at residues 640–644 (TMSKS). Residue Lys643 participates in ATP binding.

The protein belongs to the class-I aminoacyl-tRNA synthetase family.

The protein resides in the cytoplasm. The catalysed reaction is tRNA(Leu) + L-leucine + ATP = L-leucyl-tRNA(Leu) + AMP + diphosphate. In Polaromonas naphthalenivorans (strain CJ2), this protein is Leucine--tRNA ligase.